The primary structure comprises 71 residues: MEKNTVTVPKTLFSQVIHIFKYAAINLGLPFLNGVMLGFGEIFAHAFIHSLGWAPGHTRIYSIQRHQYIQA.

The helical transmembrane segment at 22–44 (YAAINLGLPFLNGVMLGFGEIFA) threads the bilayer.

The protein belongs to the MIM1 family. Component of the mitochondrial outer import machinery (MIM) complex containing at least mim1 and mim2. Interacts with mim2. Interacts with mitophagy receptor atg43.

The protein resides in the mitochondrion outer membrane. Component of the mitochondrial outer import machinery (MIM) complex that mediates transport of proteins into mitochondrial compartments. Promotes the insertion of tom70 into the outer mitochondrial membrane. Promotes the insertion of atg43 into the outer mitochondrial membrane. The MIM complex cooperates with the receptor tom70 in binding of precursor proteins and promotes their insertion and assembly into the outer membrane. Involved in import of the subset of proteins with multiple alpha-helical transmembrane segments. Required for the assembly of the TOM (translocase of outer membrane) receptor complex, which is responsible for the recognition and translocation of cytosolically synthesized mitochondrial preproteins. This chain is Mitochondrial import protein 1, found in Schizosaccharomyces pombe (strain 972 / ATCC 24843) (Fission yeast).